The following is a 276-amino-acid chain: Transmembrane protein 53 (276 aa).

Residues 170 to 190 (LLLLAAFALVVILFHFLLAPF) form a helical membrane-spanning segment.

This sequence belongs to the TMEM53 family. In terms of tissue distribution, expressed in liver (at protein level).

It localises to the nucleus outer membrane. Functionally, negatively regulates bone morphogenetic protein (BMP) signaling in osteoblast lineage cells by blocking cytoplasm-nucleus translocation of phosphorylated SMAD1/5/9 proteins. This is Transmembrane protein 53 (Tmem53) from Mus musculus (Mouse).